A 101-amino-acid chain; its full sequence is NADH-quinone oxidoreductase subunit K (101 aa).

3 helical membrane-spanning segments follow: residues 4–24 (LEHY…GLFL), 30–50 (IVLL…LVAF), and 65–85 (FVLT…VCFF).

The protein belongs to the complex I subunit 4L family. NDH-1 is composed of 14 different subunits. Subunits NuoA, H, J, K, L, M, N constitute the membrane sector of the complex.

It localises to the cell inner membrane. It catalyses the reaction a quinone + NADH + 5 H(+)(in) = a quinol + NAD(+) + 4 H(+)(out). Functionally, NDH-1 shuttles electrons from NADH, via FMN and iron-sulfur (Fe-S) centers, to quinones in the respiratory chain. The immediate electron acceptor for the enzyme in this species is believed to be ubiquinone. Couples the redox reaction to proton translocation (for every two electrons transferred, four hydrogen ions are translocated across the cytoplasmic membrane), and thus conserves the redox energy in a proton gradient. In Ruegeria pomeroyi (strain ATCC 700808 / DSM 15171 / DSS-3) (Silicibacter pomeroyi), this protein is NADH-quinone oxidoreductase subunit K.